The chain runs to 58 residues: Photosystem II reaction center protein K (58 aa).

Positions 1 to 21 are excised as a propeptide; the sequence is MFNAYLDTVLDLSANGTVILA. The chain crosses the membrane as a helical span at residues 29-49; sequence IFDPIVDVMPIIPVFFLLLAF.

This sequence belongs to the PsbK family. PSII is composed of 1 copy each of membrane proteins PsbA, PsbB, PsbC, PsbD, PsbE, PsbF, PsbH, PsbI, PsbJ, PsbK, PsbL, PsbM, PsbT, PsbX, PsbY, PsbZ, Psb30/Ycf12, at least 3 peripheral proteins of the oxygen-evolving complex and a large number of cofactors. It forms dimeric complexes.

It localises to the plastid. The protein localises to the chloroplast thylakoid membrane. Its function is as follows. One of the components of the core complex of photosystem II (PSII). PSII is a light-driven water:plastoquinone oxidoreductase that uses light energy to abstract electrons from H(2)O, generating O(2) and a proton gradient subsequently used for ATP formation. It consists of a core antenna complex that captures photons, and an electron transfer chain that converts photonic excitation into a charge separation. The sequence is that of Photosystem II reaction center protein K from Staurastrum punctulatum (Green alga).